Here is a 476-residue protein sequence, read N- to C-terminus: NADH-quinone oxidoreductase subunit N (476 aa).

The next 14 helical transmembrane spans lie at 5-25 (LALIWPELILTIGGLITLMLG), 38-58 (LSALLTLAAAAAAAIALFGVE), 70-90 (AFGGFAKLLIYAASFICILVA), 97-117 (GMRAEYPTLILFAALGMGIMA), 122-142 (LMTLYVGLELNSLAAYVLASF), 157-177 (FVLGALASGMLLYGISLLYGF), 196-218 (IGLIFGIVFVLSGLGFKISAVPF), 231-253 (TPVTTFFASAPKVAAMALMARIV), 264-284 (WQQIVIFLALASIILGAVGAI), 292-312 (LLAYSSINNVGFMLIGLAAGT), 318-338 (GVLTYLLVYLVTTLGAFLVVL), 364-384 (LAAAMSVFLFSLAGIPPLFGF), 401-421 (PLAVAGIVASVIGAFYYIAII), and 445-465 (IVAASALWLLAVGYLFIPALA).

Belongs to the complex I subunit 2 family. NDH-1 is composed of 14 different subunits. Subunits NuoA, H, J, K, L, M, N constitute the membrane sector of the complex.

The protein resides in the cell inner membrane. It catalyses the reaction a quinone + NADH + 5 H(+)(in) = a quinol + NAD(+) + 4 H(+)(out). In terms of biological role, NDH-1 shuttles electrons from NADH, via FMN and iron-sulfur (Fe-S) centers, to quinones in the respiratory chain. The immediate electron acceptor for the enzyme in this species is believed to be ubiquinone. Couples the redox reaction to proton translocation (for every two electrons transferred, four hydrogen ions are translocated across the cytoplasmic membrane), and thus conserves the redox energy in a proton gradient. The chain is NADH-quinone oxidoreductase subunit N from Sphingopyxis alaskensis (strain DSM 13593 / LMG 18877 / RB2256) (Sphingomonas alaskensis).